The chain runs to 302 residues: Homoserine O-acetyltransferase (302 aa).

Cysteine 142 (acyl-thioester intermediate) is an active-site residue. Residues lysine 163 and serine 192 each contribute to the substrate site. The Proton acceptor role is filled by histidine 235. Glutamate 237 is a catalytic residue. Arginine 249 is a binding site for substrate.

It belongs to the MetA family.

Its subcellular location is the cytoplasm. It carries out the reaction L-homoserine + acetyl-CoA = O-acetyl-L-homoserine + CoA. It functions in the pathway amino-acid biosynthesis; L-methionine biosynthesis via de novo pathway; O-acetyl-L-homoserine from L-homoserine: step 1/1. In terms of biological role, transfers an acetyl group from acetyl-CoA to L-homoserine, forming acetyl-L-homoserine. The protein is Homoserine O-acetyltransferase of Geobacillus kaustophilus (strain HTA426).